Reading from the N-terminus, the 299-residue chain is tRNA uridine(34) hydroxylase (299 aa).

Positions 132-226 (ASRPVVMLDT…YFEEVGGAHY (95 aa)) constitute a Rhodanese domain. Cysteine 186 functions as the Cysteine persulfide intermediate in the catalytic mechanism.

Belongs to the TrhO family.

It catalyses the reaction uridine(34) in tRNA + AH2 + O2 = 5-hydroxyuridine(34) in tRNA + A + H2O. Catalyzes oxygen-dependent 5-hydroxyuridine (ho5U) modification at position 34 in tRNAs. The protein is tRNA uridine(34) hydroxylase of Burkholderia pseudomallei (strain K96243).